The following is a 235-amino-acid chain: Transcription factor hepR (235 aa).

Residues 14–45 (QNSPESSRDVLSMASPGLLPIDPSPEHDETNK) form a disordered region. Residues 175–205 (IQCPCLDERGERCSRMFSRLDNMRDHVRRIH) form a C2H2-type zinc finger.

It is found in the nucleus. Its function is as follows. Transcription factor; part of the gene cluster that mediates the biosynthesis of heptelidic acid (HA), a sesquiterpene lactone that acts as an inhibitor of glyceraldehyde-3-phosphatedehydrogenase (GAPDH) and a growth inhibitor of the salt-tolerant lactic acid bacteria in soy sauce brewing. Both hepR and hepS regulate the transcription of the heptelidic acid cluster, but they are not involved in mutual transcriptional regulation and act with different mechanisms. The sequence is that of Transcription factor hepR from Aspergillus oryzae (strain ATCC 42149 / RIB 40) (Yellow koji mold).